The chain runs to 269 residues: Small ribosomal subunit protein uS2 (269 aa).

A disordered region spans residues 228–269 (ARAERQAAAAKDAAGDTGKSEADAEAVKAEAAAEEKAETTEA). Residues 233–244 (QAAAAKDAAGDT) show a composition bias toward low complexity. Residues 245–269 (GKSEADAEAVKAEAAAEEKAETTEA) show a composition bias toward basic and acidic residues.

Belongs to the universal ribosomal protein uS2 family.

In Corynebacterium urealyticum (strain ATCC 43042 / DSM 7109), this protein is Small ribosomal subunit protein uS2.